Consider the following 32-residue polypeptide: KRGFLDVITHVGKAVGKAALNAVNEMVNQGEQ.

Gln29 carries the glutamine amide modification. Positions 31–32 (EQ) are excised as a propeptide.

As to expression, expressed by the skin glands.

Its subcellular location is the secreted. Its function is as follows. Has antimicrobial activity. The chain is Cruzioseptin-9 from Cruziohyla calcarifer (Splendid leaf frog).